A 60-amino-acid polypeptide reads, in one-letter code: Large ribosomal subunit protein uL30 (60 aa).

Belongs to the universal ribosomal protein uL30 family. As to quaternary structure, part of the 50S ribosomal subunit.

The chain is Large ribosomal subunit protein uL30 from Ralstonia pickettii (strain 12J).